Consider the following 164-residue polypeptide: UPF0114 protein YqhA (164 aa).

The next 3 membrane-spanning stretches (helical) occupy residues 10-32 (YASR…ALAL), 53-75 (LILV…MVMF), and 136-155 (LMWY…VMGY).

It belongs to the UPF0114 family.

The protein localises to the cell membrane. The protein is UPF0114 protein YqhA of Shigella flexneri.